The chain runs to 464 residues: Serine--tRNA synthetase-like protein Slimp (464 aa).

This sequence belongs to the class-II aminoacyl-tRNA synthetase family. Type-1 seryl-tRNA synthetase subfamily.

It localises to the mitochondrion. Essential protein which may play a role in mitochondrial morphogenesis and function. Has transfer RNA (tRNA)-binding activity and can bind tRNA(Ser) but does not have serine--tRNA ligase activity and does not bind ATP. The polypeptide is Serine--tRNA synthetase-like protein Slimp (Drosophila melanogaster (Fruit fly)).